Reading from the N-terminus, the 154-residue chain is SsrA-binding protein (154 aa).

A disordered region spans residues 134–154; sequence ETLRRRDAKREVERALKEKNR.

This sequence belongs to the SmpB family.

Its subcellular location is the cytoplasm. Functionally, required for rescue of stalled ribosomes mediated by trans-translation. Binds to transfer-messenger RNA (tmRNA), required for stable association of tmRNA with ribosomes. tmRNA and SmpB together mimic tRNA shape, replacing the anticodon stem-loop with SmpB. tmRNA is encoded by the ssrA gene; the 2 termini fold to resemble tRNA(Ala) and it encodes a 'tag peptide', a short internal open reading frame. During trans-translation Ala-aminoacylated tmRNA acts like a tRNA, entering the A-site of stalled ribosomes, displacing the stalled mRNA. The ribosome then switches to translate the ORF on the tmRNA; the nascent peptide is terminated with the 'tag peptide' encoded by the tmRNA and targeted for degradation. The ribosome is freed to recommence translation, which seems to be the essential function of trans-translation. This Halalkalibacterium halodurans (strain ATCC BAA-125 / DSM 18197 / FERM 7344 / JCM 9153 / C-125) (Bacillus halodurans) protein is SsrA-binding protein.